We begin with the raw amino-acid sequence, 194 residues long: Inner membrane-spanning protein YciB (194 aa).

Transmembrane regions (helical) follow at residues 1 to 21, 49 to 69, 77 to 97, 120 to 140, and 150 to 170; these read MKLL…KTTN, EKMH…TILF, WKPS…GWVS, LNYS…YVAY, and FKLF…GVYI.

Belongs to the YciB family.

It is found in the cell inner membrane. Functionally, plays a role in cell envelope biogenesis, maintenance of cell envelope integrity and membrane homeostasis. This is Inner membrane-spanning protein YciB from Hahella chejuensis (strain KCTC 2396).